Consider the following 217-residue polypeptide: Large ribosomal subunit protein uL3 (217 aa).

Belongs to the universal ribosomal protein uL3 family. In terms of assembly, part of the 50S ribosomal subunit. Forms a cluster with proteins L14 and L19.

In terms of biological role, one of the primary rRNA binding proteins, it binds directly near the 3'-end of the 23S rRNA, where it nucleates assembly of the 50S subunit. This is Large ribosomal subunit protein uL3 from Mycobacterium leprae (strain TN).